The primary structure comprises 203 residues: Superoxide dismutase [Mn] (203 aa).

Residues His27, His81, Asp164, and His168 each coordinate Mn(2+).

It belongs to the iron/manganese superoxide dismutase family. As to quaternary structure, homodimer. The cofactor is Mn(2+).

It carries out the reaction 2 superoxide + 2 H(+) = H2O2 + O2. Destroys superoxide anion radicals which are normally produced within the cells and which are toxic to biological systems. In Pseudomonas putida (Arthrobacter siderocapsulatus), this protein is Superoxide dismutase [Mn] (sodA).